The sequence spans 197 residues: uncharacterized protein (197 aa).

A run of 4 helical transmembrane segments spans residues 30 to 50, 61 to 81, 101 to 121, and 130 to 150; these read WVAMGATAITVLAGAHIVEMA, LVAGASVVFWAFGPWLIPPLV, LWSVVFPLGMYGVGAYRLGLA, and IGEFEGWVALAVWTITFVAML.

The protein localises to the cell membrane. This is an uncharacterized protein from Mycobacterium tuberculosis (strain CDC 1551 / Oshkosh).